Reading from the N-terminus, the 206-residue chain is RNA pyrophosphohydrolase (206 aa).

Residues 6–149 form the Nudix hydrolase domain; it reads GYRPNVGIVL…KRGVYARALR (144 aa). The Nudix box signature appears at 38 to 59; it reads GGMNTDETPVEAMYRELQEETG. Residues 175-206 are disordered; it reads MPGHTAGHDRPRKRPRSRGYWPKKAQGDVPPT.

The protein belongs to the Nudix hydrolase family. RppH subfamily. It depends on a divalent metal cation as a cofactor.

Its function is as follows. Accelerates the degradation of transcripts by removing pyrophosphate from the 5'-end of triphosphorylated RNA, leading to a more labile monophosphorylated state that can stimulate subsequent ribonuclease cleavage. This is RNA pyrophosphohydrolase from Stenotrophomonas maltophilia (strain R551-3).